Reading from the N-terminus, the 310-residue chain is Ribose-phosphate pyrophosphokinase (310 aa).

Residues 33-35 (DGE) and 92-93 (RQ) contribute to the ATP site. Residues His-127 and Asp-166 each coordinate Mg(2+). Lys-189 is a catalytic residue. D-ribose 5-phosphate is bound by residues Arg-191, Asp-215, and 219-223 (DTAGT).

Belongs to the ribose-phosphate pyrophosphokinase family. Class I subfamily. In terms of assembly, homohexamer. Mg(2+) is required as a cofactor.

Its subcellular location is the cytoplasm. The catalysed reaction is D-ribose 5-phosphate + ATP = 5-phospho-alpha-D-ribose 1-diphosphate + AMP + H(+). It functions in the pathway metabolic intermediate biosynthesis; 5-phospho-alpha-D-ribose 1-diphosphate biosynthesis; 5-phospho-alpha-D-ribose 1-diphosphate from D-ribose 5-phosphate (route I): step 1/1. Its function is as follows. Involved in the biosynthesis of the central metabolite phospho-alpha-D-ribosyl-1-pyrophosphate (PRPP) via the transfer of pyrophosphoryl group from ATP to 1-hydroxyl of ribose-5-phosphate (Rib-5-P). The chain is Ribose-phosphate pyrophosphokinase from Bordetella parapertussis (strain 12822 / ATCC BAA-587 / NCTC 13253).